Reading from the N-terminus, the 455-residue chain is Serine--tRNA ligase (455 aa).

252 to 254 provides a ligand contact to L-serine; that stretch reads TAE. ATP-binding positions include 283–285 and valine 299; that span reads RKE. Glutamate 306 provides a ligand contact to L-serine. Residue 370–373 participates in ATP binding; it reads EVVS. Residue threonine 406 participates in L-serine binding.

The protein belongs to the class-II aminoacyl-tRNA synthetase family. Type-1 seryl-tRNA synthetase subfamily. Homodimer. The tRNA molecule binds across the dimer.

Its subcellular location is the cytoplasm. The enzyme catalyses tRNA(Ser) + L-serine + ATP = L-seryl-tRNA(Ser) + AMP + diphosphate + H(+). It catalyses the reaction tRNA(Sec) + L-serine + ATP = L-seryl-tRNA(Sec) + AMP + diphosphate + H(+). Its pathway is aminoacyl-tRNA biosynthesis; selenocysteinyl-tRNA(Sec) biosynthesis; L-seryl-tRNA(Sec) from L-serine and tRNA(Sec): step 1/1. In terms of biological role, catalyzes the attachment of serine to tRNA(Ser). Is also able to aminoacylate tRNA(Sec) with serine, to form the misacylated tRNA L-seryl-tRNA(Sec), which will be further converted into selenocysteinyl-tRNA(Sec). This chain is Serine--tRNA ligase, found in Pyrococcus horikoshii (strain ATCC 700860 / DSM 12428 / JCM 9974 / NBRC 100139 / OT-3).